Reading from the N-terminus, the 248-residue chain is Pulmonary surfactant-associated protein A (248 aa).

Residues 1-20 form the signal peptide; sequence MSLGSLAFTLFLTVVAGIKC. Asparagine 21 carries an N-linked (GlcNAc...) asparagine glycan. One can recognise a Collagen-like domain in the interval 28-100; it reads GSPGIPGTPG…PGERGLPGFP (73 aa). The segment at 28 to 100 is disordered; that stretch reads GSPGIPGTPG…PGERGLPGFP (73 aa). 10 positions are modified to 4-hydroxyproline: proline 30, proline 33, proline 36, proline 42, proline 54, proline 57, proline 63, proline 67, proline 70, and proline 76. Positions 42–51 are enriched in basic and acidic residues; that stretch reads PGRDGRDGIK. Residues 54-65 show a composition bias toward pro residues; it reads PGPPGPMGPPGG. The segment covering 69–82 has biased composition (low complexity); it reads LPGRDGLPGAPGAP. Residues 84–93 are compositionally biased toward basic and acidic residues; the sequence is EHGDKGEPGE. The 117-residue stretch at 132–248 folds into the C-type lectin domain; that stretch reads LSVGDKVFST…LQYRLAICEF (117 aa). Disulfide bonds link cysteine 155-cysteine 246 and cysteine 224-cysteine 238. A glycan (N-linked (GlcNAc...) asparagine) is linked at asparagine 207. 4 residues coordinate Ca(2+): glutamate 215, arginine 217, asparagine 234, and aspartate 235.

The protein belongs to the SFTPA family. Oligomeric complex of 6 set of homotrimers.

The protein resides in the secreted. Its subcellular location is the extracellular space. It localises to the extracellular matrix. The protein localises to the surface film. In presence of calcium ions, it binds to surfactant phospholipids and contributes to lower the surface tension at the air-liquid interface in the alveoli of the mammalian lung and is essential for normal respiration. Enhances the expression of MYO18A/SP-R210 on alveolar macrophages. In Mus musculus (Mouse), this protein is Pulmonary surfactant-associated protein A (Sftpa1).